The sequence spans 309 residues: Ribose-phosphate pyrophosphokinase (309 aa).

ATP-binding positions include 37-39 (DGE) and 96-97 (RQ). 2 residues coordinate Mg(2+): His130 and Asp169. Residue Lys192 is part of the active site. D-ribose 5-phosphate-binding positions include Arg194, Asp218, and 222 to 226 (DTAGT).

This sequence belongs to the ribose-phosphate pyrophosphokinase family. Class I subfamily. As to quaternary structure, homohexamer. Mg(2+) serves as cofactor.

Its subcellular location is the cytoplasm. It carries out the reaction D-ribose 5-phosphate + ATP = 5-phospho-alpha-D-ribose 1-diphosphate + AMP + H(+). The protein operates within metabolic intermediate biosynthesis; 5-phospho-alpha-D-ribose 1-diphosphate biosynthesis; 5-phospho-alpha-D-ribose 1-diphosphate from D-ribose 5-phosphate (route I): step 1/1. In terms of biological role, involved in the biosynthesis of the central metabolite phospho-alpha-D-ribosyl-1-pyrophosphate (PRPP) via the transfer of pyrophosphoryl group from ATP to 1-hydroxyl of ribose-5-phosphate (Rib-5-P). The protein is Ribose-phosphate pyrophosphokinase of Wolinella succinogenes (strain ATCC 29543 / DSM 1740 / CCUG 13145 / JCM 31913 / LMG 7466 / NCTC 11488 / FDC 602W) (Vibrio succinogenes).